The sequence spans 61 residues: Metallothionein-2B (61 aa).

N-acetylmethionine is present on M1. Residues 1 to 29 (MDPNCSCATGDSCTCASSCKCKECKCTSC) form a beta region. Positions 5, 7, 13, 15, 19, 21, 24, 26, 29, 33, 34, 36, 37, 41, 44, 48, 50, 57, 59, and 60 each coordinate a divalent metal cation. Positions 30-61 (KKSCCSCCPAGCTKCAQGCICKGASDKCSCCA) are alpha.

The protein belongs to the metallothionein superfamily. Type 1 family. As to quaternary structure, monomer.

Metallothioneins have a high content of cysteine residues that bind various heavy metals; these proteins are transcriptionally regulated by both heavy metals and glucocorticoids. In Oryctolagus cuniculus (Rabbit), this protein is Metallothionein-2B.